A 520-amino-acid chain; its full sequence is 5'-nucleotidase domain-containing protein 2 (520 aa).

Aspartate 73 serves as the catalytic Nucleophile. Residues aspartate 73, aspartate 75, and aspartate 358 each coordinate Mg(2+). Catalysis depends on aspartate 75, which acts as the Proton donor.

It belongs to the 5'(3')-deoxyribonucleotidase family. As to quaternary structure, interacts with tyrosine 3-monooxygenase TH; the interaction results in reduced phosphorylation and decreased catalytic activity of TH.

It localises to the cytoplasm. Functionally, promotes dephosphorylation of tyrosine 3-monooxygenase TH which decreases TH catalytic activity and leads to reduced synthesis of catecholamines including dopamine, noradrenaline and adrenaline. The exact mechanism of activity is unknown but may act as a phosphatase or promote the activity of phosphatases or may inhibit phosphorylation by acting as a barrier to interfere with protein kinase access. The protein is 5'-nucleotidase domain-containing protein 2 (NT5DC2) of Homo sapiens (Human).